A 721-amino-acid polypeptide reads, in one-letter code: bZIP transcription factor 17 (721 aa).

Disordered stretches follow at residues 1-51 and 87-232; these read MAEP…LMSD and QEQF…EKKR. Topologically, residues 1-366 are cytoplasmic; sequence MAEPITKEQP…KSEAKTKKVA (366 aa). The span at 9-25 shows a compositional bias: pro residues; sequence QPPPPAPDPNSTYPPPS. The span at 125-141 shows a compositional bias: basic and acidic residues; sequence ESPRDSDDRCSGADHNL. Positions 146–170 are enriched in polar residues; it reads PLSSQGSGNCGSDVSEATNESSPKS. The span at 204 to 216 shows a compositional bias: basic and acidic residues; it reads DESRNSKYRRSGE. In terms of domain architecture, bZIP spans 228–288; it reads DEKKRARLMR…AENATLRQQL (61 aa). A basic motif region spans residues 230 to 261; it reads KKRARLMRNRESAQLSRQRKKHYVEELEEKVR. The segment at 267 to 274 is leucine-zipper; the sequence is ITDLNGKI. Positions 337–359 are disordered; that stretch reads PRLKPQNTLGTSKAKKSESKKSE. A helical membrane pass occupies residues 367–387; it reads SISFLGLLFCLFLFGALAPIV. Over 388-721 the chain is Lumenal; sequence NVNYGGISGA…RSGAPHLVTT (334 aa). A compositionally biased stretch (polar residues) spans 422 to 436; that stretch reads TSRSGAGTGVSNSNG. The segment at 422 to 462 is disordered; it reads TSRSGAGTGVSNSNGMHRGRDSDRGARKNISATESSVTPGN. 4 N-linked (GlcNAc...) asparagine glycosylation sites follow: N450, N462, N609, and N617. The span at 451-462 shows a compositional bias: polar residues; that stretch reads ISATESSVTPGN. The RRIL cleavage motif signature appears at 627–630; it reads RRIL. N-linked (GlcNAc...) asparagine glycans are attached at residues N643 and N651.

Belongs to the bZIP family. In terms of assembly, interacts with BZIP28.

It localises to the endoplasmic reticulum membrane. It is found in the golgi apparatus membrane. The protein resides in the nucleus. Functionally, transcriptional activator involved in salt and osmotic stress responses. Functions as a stress sensor and transducer in a signaling pathway that resembles an ER stress response. Following salt stress, BZIP17 is cleaved by SBT6.1 (S1P) and S2P at the C-terminus and the N-terminal bZIP component is translocated to the nucleus, where it activates the expression of salt stress response genes. Functions as a stress sensor and transducer in ER stress signaling pathway. ER stress induces proteolysis of BZIP17 by SBT6.1 (S1P) and S2P, and the N-terminal bZIP component is translocated to the nucleus, where it activates the expression and production of ER chaperones, as well as protein involved in brassinosteroid (BR) signaling, which is required for stress acclimation and growth. The chain is bZIP transcription factor 17 from Arabidopsis thaliana (Mouse-ear cress).